A 159-amino-acid polypeptide reads, in one-letter code: Succinate dehydrogenase [ubiquinone] cytochrome b small subunit, mitochondrial (159 aa).

Residues methionine 1–glutamine 36 constitute a mitochondrion transit peptide. Residues aspartate 37–serine 63 lie on the Mitochondrial matrix side of the membrane. The helical transmembrane segment at leucine 64–leucine 85 threads the bilayer. Topologically, residues asparagine 86–alanine 90 are mitochondrial intermembrane. A helical transmembrane segment spans residues methionine 91–valine 111. Heme b is bound at residue histidine 102. Topologically, residues threonine 112 to leucine 120 are mitochondrial matrix. Tyrosine 114 is an a ubiquinone binding site. A helical transmembrane segment spans residues glutamine 121–phenylalanine 142. Residues asparagine 143–leucine 159 lie on the Mitochondrial intermembrane side of the membrane.

It belongs to the CybS family. As to quaternary structure, component of complex II composed of four subunits: the flavoprotein (FP) SDHA, iron-sulfur protein (IP) SDHB, and a cytochrome b560 composed of SDHC and SDHD.

The protein localises to the mitochondrion inner membrane. It participates in carbohydrate metabolism; tricarboxylic acid cycle. Functionally, membrane-anchoring subunit of succinate dehydrogenase (SDH) that is involved in complex II of the mitochondrial electron transport chain and is responsible for transferring electrons from succinate to ubiquinone (coenzyme Q). SDH also oxidizes malate to the non-canonical enol form of oxaloacetate, enol-oxaloacetate. Enol-oxaloacetate, which is a potent inhibitor of the succinate dehydrogenase activity, is further isomerized into keto-oxaloacetate. The chain is Succinate dehydrogenase [ubiquinone] cytochrome b small subunit, mitochondrial (SDHD) from Sus scrofa (Pig).